The sequence spans 249 residues: Thrombin-like enzyme barnettobin (249 aa).

Positions 1–10 (APKELQVSYA) are cleaved as a signal peptide. Positions 11 to 16 (HKSSEL) are excised as a propeptide. The region spanning 17-240 (VIGGDECDIN…YPPWIQSIIA (224 aa)) is the Peptidase S1 domain. 6 cysteine pairs are disulfide-bonded: cysteine 23/cysteine 154, cysteine 41/cysteine 57, cysteine 89/cysteine 247, cysteine 133/cysteine 201, cysteine 165/cysteine 180, and cysteine 191/cysteine 216. Residues histidine 56 and aspartate 101 each act as charge relay system in the active site. 2 N-linked (GlcNAc...) asparagine glycosylation sites follow: asparagine 145 and asparagine 161. Serine 195 (charge relay system) is an active-site residue. Asparagine 242 is a glycosylation site (N-linked (GlcNAc...) asparagine).

Belongs to the peptidase S1 family. Snake venom subfamily. Monomer. Glycoprotein, contains approx. 52% carbohydrate which could be removed by N-glycosidase. Glycosylation is important, since deglycosylated barnettobin loses its clotting and defibrinogenating effects. In terms of tissue distribution, expressed by the venom gland.

It is found in the secreted. Its activity is regulated as follows. Both coagulant and amidolytic activities are inhibited by PMSF. Amidolytic activity is partially inhibited by DTT, chymostatin, SBTI and TLCK, but not by heparin and EDTA. Thrombin-like snake venom serine protease that releases only fibrinopeptide A from human Aalpha chain of fibrinogen (specific coagulant activity was 251.7 NIH thrombin units/mg). Also shows fibrino(geno)lytic activities in vitro and defibrinogenating effects in vivo. The polypeptide is Thrombin-like enzyme barnettobin (Bothrops barnetti (Barnett's lancehead)).